A 553-amino-acid chain; its full sequence is Transcription factor 7-like 1 (553 aa).

Residues 1–11 are compositionally biased toward gly residues; the sequence is MPQLNSGGGDE. Residues 1–61 are interaction with CTNNB1; that stretch reads MPQLNSGGGD…SENHSSDSDS (61 aa). Disordered regions lie at residues 1-77, 183-213, and 392-474; these read MPQL…EKPR, GTPP…PYYP, and SARD…LTTK. 2 stretches are compositionally biased toward basic and acidic residues: residues 17–32 and 52–77; these read ELIR…EKSP and SENH…EKPR. Residues 109–312 are interaction with AES and TLE4; it reads LGGHYLPNGA…SPNLITKPSV (204 aa). Residues 324 to 392 constitute a DNA-binding region (HMG box); sequence IKKPLNAFML…LHSQLYPTWS (69 aa). Residues 407-416 show a composition bias toward basic and acidic residues; that stretch reads KQSPEMEITK. The tract at residues 408 to 553 is interaction with CTBP; the sequence is QSPEMEITKT…PLSLVTKSSD (146 aa). The segment covering 444–463 has biased composition (low complexity); sequence SPATPSAALASPAAPAATHS. Residues 464-473 show a composition bias toward polar residues; the sequence is EQAQPLSLTT.

The protein belongs to the TCF/LEF family. As to quaternary structure, interacts with csnk1e, ctnnb1, ctbp, dact1 and gsk3b. May interact with ase and tle4. Phosphorylated. Phosphorylation by csnk1e promotes binding to ctnnb1 while phosphorylation by gsk3b may reverse this effect.

The protein resides in the nucleus. In terms of biological role, participates in the Wnt signaling pathway. Binds to DNA and acts as a repressor in the absence of ctnnb1, and as an activator in its presence. Required early in development for the establishment of the dorsal body axis in response to maternal Wnt signaling. In Xenopus tropicalis (Western clawed frog), this protein is Transcription factor 7-like 1 (tcf7l1).